The chain runs to 205 residues: Guanylate kinase (205 aa).

The Guanylate kinase-like domain occupies 18-196 (PKLFTISAPA…AYQVLRSIFI (179 aa)). 25 to 32 (APAGAGKT) contributes to the ATP binding site.

It belongs to the guanylate kinase family.

Its subcellular location is the cytoplasm. The catalysed reaction is GMP + ATP = GDP + ADP. Its function is as follows. Essential for recycling GMP and indirectly, cGMP. The sequence is that of Guanylate kinase (gmk) from Chlamydia muridarum (strain MoPn / Nigg).